A 138-amino-acid chain; its full sequence is Glutaredoxin-C7 (138 aa).

A disordered region spans residues 17–40 (SSTRGGGGGGMLGLTLFDPPGGEQ). Residues 42 to 137 (AERIGRLVRE…PRLREVGALC (96 aa)) enclose the Glutaredoxin domain. C62 and C65 are oxidised to a cystine.

The protein belongs to the glutaredoxin family. CC-type subfamily.

Its subcellular location is the cytoplasm. Has a glutathione-disulfide oxidoreductase activity in the presence of NADPH and glutathione reductase. Reduces low molecular weight disulfides and proteins. This is Glutaredoxin-C7 (GRXC7) from Oryza sativa subsp. japonica (Rice).